A 162-amino-acid polypeptide reads, in one-letter code: MYGRSNAPGCQPPVRAHPPSSPMTSRLQLAAMEQNASDAALSGMQQARSRQASPKRLRDLIPSSDVESMSLNALDDAYGHHDFSVWFEDLMPPEMELLMPTTDAKLNYLSFTRRLASSVFHSPDNRMPGGACDHTSALDARKERFATIINKFLDLHQILHDA.

The tract at residues 1–58 (MYGRSNAPGCQPPVRAHPPSSPMTSRLQLAAMEQNASDAALSGMQQARSRQASPKRLR) is disordered. The segment covering 43-52 (GMQQARSRQA) has biased composition (polar residues).

Belongs to the herpesviridae TRM2 protein family. As to quaternary structure, associates with TRM1 and TRM3 to form the tripartite terminase complex.

It is found in the host nucleus. Its function is as follows. Component of the molecular motor that translocates viral genomic DNA in empty capsid during DNA packaging. Forms a tripartite terminase complex together with TRM1 and TRM3 in the host cytoplasm. Once the complex reaches the host nucleus, it interacts with the capsid portal vertex. This portal forms a ring in which genomic DNA is translocated into the capsid. In Equine herpesvirus 1 (strain Ab4p) (EHV-1), this protein is Tripartite terminase subunit 2.